Reading from the N-terminus, the 471-residue chain is FAD-dependent monooxygenase andE (471 aa).

Positions 35, 49, and 108 each coordinate FAD. Tyr-216 is a catalytic residue. 2 residues coordinate FAD: Asp-308 and Ala-321. 2 consecutive transmembrane segments (helical) span residues 403–423 (LANI…LPFP) and 443–463 (TPFA…LLGL).

This sequence belongs to the paxM FAD-dependent monooxygenase family. FAD is required as a cofactor.

It is found in the membrane. It functions in the pathway secondary metabolite biosynthesis; terpenoid biosynthesis. FAD-dependent monooxygenase; part of the gene cluster that mediates the biosynthesis of anditomin, a fungal meroterpenoid. The first step of the pathway is the synthesis of 3,5-dimethylorsellinic acid (DMOA) by the polyketide synthase andM. DMOA is then converted to the phthalide compound 5,7-dihydroxy-4,6-dimethylphthalide (DHDMP) by the cytochrome P450 monooxygenase andK, which is further prenylated by the prenyltransferase andD to yield farnesyl-DHDMP. Further epoxidation by the FAD-dependent monooxygenase andE leads to epoxyfarnesyl-DHDMP. The next step involves the terpene cyclase andB that converts epoxyfarnesyl-DHDMP into preandiloid A through opening of the epoxide ring followed by the cyclization of the farnesyl moiety. Preandiloid A is in turn oxidized at the C-3 hydroxyl group to yield preandiloid B by the dehydrogenase andC. The dioxygenase andA is solely responsible for the dehydrogenation of preandiloid B leading to the enone preandiloid C, as well as for the intriguing structural rearrangement to generate the bicyclo[2.2.2]octane core, transforming preandiloid C into andiconin. FAD-binding monooxygenase andJ then produces andilesin D which is reduced by dehydrogenase andI to yield andilesin A. Action of acetyltransferase andG followed by a spontaneous acetate elimination leads then to andilesin B, which is in turn substrate of the short chain dehydrogenase andH to yield andilesin C. Finally, the dioxygenase andF catalyzes the transformation of andilesin C to anditomin. The protein is FAD-dependent monooxygenase andE of Emericella variicolor (Aspergillus stellatus).